We begin with the raw amino-acid sequence, 394 residues long: MAKEVFQRTKPHMNVGTIGHVDHGKTTLTAAISIYCSKLNKDAKALKYEDIDNAPEEKARGITINARHIEYETANRHYAHVDCPGHADYIKNMITGAAQMDAAILLVAADSGAEPQTKEHLLLAQRMGIKKIIVFLNKLDLADPELVELVEVEVLELVEKYGFSADTPIIKGSAFGAMSNPEDPESTKCVKELLESMDNYFDLPERDIDKPFLLAVEDVFSISGRGTVATGRIERGIIKVGQEVEIVGIKETRKTTVTGVEMFQKILEQGQAGDNVGLLLRGVDKKDIERGQVLSAPGTITPHKKFKASIYCLTKEEGGRHKPFFPGYRPQFFFRTTDVTGVVALEGKEMVMPGDNVDIIVELISSIAMDKNVEFAVREGGRTVASGRILEILE.

The tr-type G domain occupies 10 to 205 (KPHMNVGTIG…SMDNYFDLPE (196 aa)). The segment at 19–26 (GHVDHGKT) is G1. Residue 19–26 (GHVDHGKT) participates in GTP binding. Thr-26 serves as a coordination point for Mg(2+). The segment at 61 to 65 (GITIN) is G2. The tract at residues 82–85 (DCPG) is G3. GTP is bound by residues 82–86 (DCPGH) and 137–140 (NKLD). The interval 137-140 (NKLD) is G4. The segment at 173 to 175 (SAF) is G5.

It belongs to the TRAFAC class translation factor GTPase superfamily. Classic translation factor GTPase family. EF-Tu/EF-1A subfamily. In terms of assembly, monomer.

Its subcellular location is the cytoplasm. It catalyses the reaction GTP + H2O = GDP + phosphate + H(+). In terms of biological role, GTP hydrolase that promotes the GTP-dependent binding of aminoacyl-tRNA to the A-site of ribosomes during protein biosynthesis. The chain is Elongation factor Tu from Borreliella burgdorferi (strain ATCC 35210 / DSM 4680 / CIP 102532 / B31) (Borrelia burgdorferi).